The following is a 204-amino-acid chain: UPF0134 protein MPN_655 (204 aa).

Residues 46 to 132 form a disordered region; the sequence is EVENKPKIPI…FNEFKDSNNQ (87 aa). Residues 64–80 show a composition bias toward pro residues; the sequence is SPKPLKPPKPPKPPKGP. Residues 117–132 are compositionally biased toward basic and acidic residues; it reads YVTRKEFNEFKDSNNQ.

This sequence belongs to the UPF0134 family.

This is UPF0134 protein MPN_655 from Mycoplasma pneumoniae (strain ATCC 29342 / M129 / Subtype 1) (Mycoplasmoides pneumoniae).